A 464-amino-acid polypeptide reads, in one-letter code: Argininosuccinate lyase (464 aa).

This sequence belongs to the lyase 1 family. Argininosuccinate lyase subfamily.

It localises to the cytoplasm. It catalyses the reaction 2-(N(omega)-L-arginino)succinate = fumarate + L-arginine. Its pathway is amino-acid biosynthesis; L-arginine biosynthesis; L-arginine from L-ornithine and carbamoyl phosphate: step 3/3. The protein is Argininosuccinate lyase of Pseudomonas syringae pv. tomato (strain ATCC BAA-871 / DC3000).